Here is a 515-residue protein sequence, read N- to C-terminus: MKKSAWGLVDAFFDKYDLVDHHIHSYNDFVSNRIQEIIDTSEPIELEQGQYTVETGKVTIEKPFIKEADGSKSKIYPTEARLRNLTYSAHMSLEMRLLKEGGSETEFEKVHIGELPVMLKSEICHLHGLGRDELIEKGEDPADLGGYFIVNASERSIVTMEEIAPNKIILERIGEEDEKRARAIVTSIRSGFRARISLEYRKPRKTGVFLRISFPYVPGELPLVILLRALGLATDQEIITSISDDFNYQMIAADDIQVSLDKLKLDSDKMEEEMDEEERREYLIRSAIKYIGNRVAKGMTEDYRIKRAEDVIDRYLLPHIGTEPDKRLEKAVYLAEMTEMLLQVISGERKPHDKDHYTNKRLRVSGDLMEDLFRVAFTSLTRDMSYRLERSLARGKEPSVKQAVRSDVLSENLKHAIATGNWVGGRAGVSQLLDRTSYMGTLSHMRRVVSPLSRSQPHFEARDLHPTQFGKICPNETPESPNCGLVKNLALMAKISEGSDPDEIEEVIKKMGVIN.

This sequence belongs to the RNA polymerase beta chain family. In terms of assembly, part of the RNA polymerase complex.

It localises to the cytoplasm. It carries out the reaction RNA(n) + a ribonucleoside 5'-triphosphate = RNA(n+1) + diphosphate. In terms of biological role, DNA-dependent RNA polymerase (RNAP) catalyzes the transcription of DNA into RNA using the four ribonucleoside triphosphates as substrates. The Rpo2 subunit (Rpo2N and Rpo2C in this organism) is implicated in DNA promoter recognition and in nucleotide binding. This Methanothermobacter thermautotrophicus (strain Winter) (Methanobacterium thermoautotrophicum) protein is DNA-directed RNA polymerase subunit Rpo2N.